The following is a 199-amino-acid chain: Protein-L-isoaspartate O-methyltransferase (199 aa).

Ser51 is a catalytic residue.

The protein belongs to the methyltransferase superfamily. L-isoaspartyl/D-aspartyl protein methyltransferase family.

It localises to the cytoplasm. The enzyme catalyses [protein]-L-isoaspartate + S-adenosyl-L-methionine = [protein]-L-isoaspartate alpha-methyl ester + S-adenosyl-L-homocysteine. Catalyzes the methyl esterification of L-isoaspartyl residues in peptides and proteins that result from spontaneous decomposition of normal L-aspartyl and L-asparaginyl residues. It plays a role in the repair and/or degradation of damaged proteins. This is Protein-L-isoaspartate O-methyltransferase from Fervidobacterium nodosum (strain ATCC 35602 / DSM 5306 / Rt17-B1).